We begin with the raw amino-acid sequence, 640 residues long: MDDEETAEIDETNSAAADMQVELGPEQLQQEMPQNGSGDGAAVSAIAAVSTAHVNSRARLENMIEEVDNMFEEVSELMVDVTELMRRANELREDPGTAALAENARPPAEIEEQPAQQEEQASLPYDSPSRASISSRHSGSDMSLDSPGSEDDSDAEAVPRWMIPANRVRSAVDMLVSQARNRDGGIATLLRRENFLQRVRSMVFSQDRIRGRASDEANADVINTVPDETPESPPAPLDVDMEEGVRFDTNLPAEHSYFGTNLNRVPGVDYLEVGSTHRMLIFMHQHILFPGEVLPFMIHGSIIDEEIQDSGRDGVIFGVGFPLMQPPDDNPHKLYGVTCQIYEKGESGRQHVFYKSRALQRIVINCDDIQGPPQYIARNPTMKCYSKVKILPEYFLPEPLKCIDMGSLNRFRDIPSMEKKFRRYQLTSTPWPYEACEEYSFEHIVEKARQKLEIHKIDTMPKCPIQLSFWLVRNLHLTEKMMRLTFLTDSVNIRLQIIDTTLKQESLFYCRYCNSSLAYCSDLFAMSKHGVQTQYCNSAGYIHETNTVYRVIAHAIGYSGEPSTEFSWFPGYQWHIIICKFCAQHVGWEFKAVEPNLAPKVFFGLAGSSVRIGKTSERTPTHGSTFVVRNLLRLVSRELE.

A compositionally biased stretch (acidic residues) spans 1-11; it reads MDDEETAEIDE. Disordered stretches follow at residues 1 to 25 and 92 to 159; these read MDDE…ELGP and REDP…EAVP. Positions 113 to 137 are enriched in low complexity; the sequence is QPAQQEEQASLPYDSPSRASISSRH. One can recognise a Lon N-terminal domain in the interval 278–506; sequence RMLIFMHQHI…IIDTTLKQES (229 aa). The CULT domain maps to 505 to 614; that stretch reads ESLFYCRYCN…LAGSSVRIGK (110 aa). Positions 510, 513, 579, and 582 each coordinate Zn(2+).

The protein belongs to the CRBN family. In terms of assembly, likely a component of a DCX (DDB1-CUL4-X-box) protein ligase complex. May interact with pic/DDB1. Post-translationally, ubiquitinated.

The protein resides in the nucleus. It functions in the pathway protein modification; protein ubiquitination. Substrate recognition component of a DCX (DDB1-CUL4-X-box) E3 protein ligase complex that mediates the ubiquitination and subsequent proteasomal degradation of target proteins. Has an essential role in mediating growth by negatively regulating insulin signaling. It also has a role in maintaining presynaptic function in the neuromuscular junction synapses of third-instar larvae. This chain is Protein cereblon, found in Drosophila virilis (Fruit fly).